Here is a 404-residue protein sequence, read N- to C-terminus: Voltage-gated potassium channel subunit beta-3 (404 aa).

Polar residues predominate over residues 1–14 (MQVSIACTEQNLRS). The interval 1-78 (MQVSIACTEQ…RESTGRGTGM (78 aa)) is disordered. Positions 28-50 (PGGGNGGPVGGGHGNPPGGGGLG) are enriched in gly residues. NADP(+) is bound by residues Thr-97, Trp-98, Gln-104, and Asp-126. Tyr-131 (proton donor/acceptor) is an active-site residue. NADP(+)-binding residues include Asn-199, Ser-229, Arg-230, Gln-255, Trp-284, Ser-285, Pro-286, Leu-287, Ala-288, Cys-289, Lys-295, Lys-305, Gly-364, Ser-366, Gln-370, and Glu-373.

The protein belongs to the shaker potassium channel beta subunit family. As to quaternary structure, forms heteromultimeric complex with alpha subunits. Interacts with KCNA5 and KCNB2. In terms of tissue distribution, predominantly expressed in brain. Strongest expression in olfactory bulb and thalamic nuclei. Not detected in heart, spleen, lung, liver, skeletal muscle, kidney and testis.

It is found in the cytoplasm. Functionally, regulatory subunit of the voltage-gated potassium (Kv) channels composed of pore-forming and potassium-conducting alpha subunits and of regulatory beta subunits. The beta-3/KCNAB3 subunit may mediate closure of potassium channels. Inactivates Kv1.4/KCNA4 alpha subunit-containing Kv channel current but not Kv1.1/KCNA1 or Kv1.5/KCNA5 channels. May display nicotinamide adenine dinucleotide phosphate (NADPH)-dependent aldoketoreductase activity. The binding of oxidized and reduced NADP(H) cofactors may be required for the regulation of potassium channel activity. In Rattus norvegicus (Rat), this protein is Voltage-gated potassium channel subunit beta-3.